An 83-amino-acid chain; its full sequence is uncharacterized protein (83 aa).

Its subcellular location is the plastid. The protein localises to the chloroplast. This is an uncharacterized protein from Pinus thunbergii (Japanese black pine).